Consider the following 126-residue polypeptide: Profilin-2 (126 aa).

S2 carries the post-translational modification Blocked amino end (Ser). An N6,N6,N6-trimethyllysine modification is found at K104.

Belongs to the profilin family. In terms of assembly, occurs in many kinds of cells as a complex with monomeric actin in a 1:1 ratio.

Its subcellular location is the cytoplasm. The protein localises to the cytoskeleton. Its function is as follows. Binds to actin and affects the structure of the cytoskeleton. At high concentrations, profilin prevents the polymerization of actin, whereas it enhances it at low concentrations. By binding to PIP2, it inhibits the formation of IP3 and DG. This Acanthamoeba castellanii (Amoeba) protein is Profilin-2.